Reading from the N-terminus, the 211-residue chain is Endo-1,4-beta-xylanase 4 (211 aa).

Positions 1–16 (MKVTAAFAGLLVTAFA) are cleaved as a signal peptide. In terms of domain architecture, GH11 spans 19 to 210 (VPEPVLVSRS…GACSASVTIS (192 aa)). N-linked (GlcNAc...) asparagine glycosylation is present at Asn101. The Nucleophile role is filled by Glu106. Glu197 acts as the Proton donor in catalysis.

The protein belongs to the glycosyl hydrolase 11 (cellulase G) family.

It localises to the secreted. The enzyme catalyses Endohydrolysis of (1-&gt;4)-beta-D-xylosidic linkages in xylans.. It participates in glycan degradation; xylan degradation. Functionally, endo-1,4-beta-xylanase involved in the hydrolysis of xylan, a major structural heterogeneous polysaccharide found in plant biomass representing the second most abundant polysaccharide in the biosphere, after cellulose. This Aspergillus niger protein is Endo-1,4-beta-xylanase 4 (XYN4).